The chain runs to 169 residues: TPD1 protein homolog 1B (169 aa).

Positions 1–25 (MADCTTMRLASSVTIILLLLVASQA) are cleaved as a signal peptide.

As to expression, expressed in roots, and at low levels in anthers during meiosis.

Its function is as follows. May play a role during anther development. This chain is TPD1 protein homolog 1B, found in Oryza sativa subsp. japonica (Rice).